A 151-amino-acid chain; its full sequence is UPF0178 protein Suden_0449 (151 aa).

It belongs to the UPF0178 family.

The sequence is that of UPF0178 protein Suden_0449 from Sulfurimonas denitrificans (strain ATCC 33889 / DSM 1251) (Thiomicrospira denitrificans (strain ATCC 33889 / DSM 1251)).